A 255-amino-acid chain; its full sequence is Adenosylcobinamide-GDP ribazoletransferase (255 aa).

Helical transmembrane passes span 43–63 (LVGT…SLFF), 64–84 (PYQV…GAFH), 113–133 (IGTY…VFLT), 141–161 (FGLM…TLIY), 195–215 (LAAI…AILF), and 234–254 (CLGG…IAVV).

This sequence belongs to the CobS family. It depends on Mg(2+) as a cofactor.

It localises to the cell inner membrane. The catalysed reaction is alpha-ribazole + adenosylcob(III)inamide-GDP = adenosylcob(III)alamin + GMP + H(+). The enzyme catalyses alpha-ribazole 5'-phosphate + adenosylcob(III)inamide-GDP = adenosylcob(III)alamin 5'-phosphate + GMP + H(+). The protein operates within cofactor biosynthesis; adenosylcobalamin biosynthesis; adenosylcobalamin from cob(II)yrinate a,c-diamide: step 7/7. Joins adenosylcobinamide-GDP and alpha-ribazole to generate adenosylcobalamin (Ado-cobalamin). Also synthesizes adenosylcobalamin 5'-phosphate from adenosylcobinamide-GDP and alpha-ribazole 5'-phosphate. This Vibrio vulnificus (strain CMCP6) protein is Adenosylcobinamide-GDP ribazoletransferase.